The sequence spans 182 residues: Oligoribonuclease (182 aa).

Residues 8-171 form the Exonuclease domain; sequence LIWIDLEMTG…DDIRESIKEL (164 aa). Tyrosine 129 is a catalytic residue.

It belongs to the oligoribonuclease family.

The protein localises to the cytoplasm. Its function is as follows. 3'-to-5' exoribonuclease specific for small oligoribonucleotides. This Haemophilus influenzae (strain ATCC 51907 / DSM 11121 / KW20 / Rd) protein is Oligoribonuclease (orn).